Consider the following 248-residue polypeptide: Granulin (248 aa).

Belongs to the polyhedrin family.

In terms of biological role, component of the virus occlusion bodies, which are large proteinaceous structures, that protect the virus from the outside environment for extended periods until they are ingested by insect larvae. In Choristoneura fumiferana (Spruce budworm moth), this protein is Granulin.